The chain runs to 119 residues: MGLLFVELLPRHGDGGGPASAVLKCRRCRVDAASADAILSRDFRGRFGRAYLFDHVVNISLGPNEDRYLMTGLHTVKDIYCSCCQQILGWRYEKAYEESEKYKEGKFILEKARMWKEAR.

Positions 21–118 (AVLKCRRCRV…LEKARMWKEA (98 aa)) constitute a Yippee domain. Cys25, Cys28, Cys81, and Cys84 together coordinate Zn(2+).

This sequence belongs to the yippee family.

The protein is Putative yippee-like protein Os10g0369500 of Oryza sativa subsp. japonica (Rice).